A 662-amino-acid polypeptide reads, in one-letter code: Acyl-coenzyme A oxidase acox-1.4 (662 aa).

FAD is bound by residues 148–151 (YAQT), 156–157 (GT), and Gly-190. Residues 284–287 (KVNH) and Arg-294 each bind substrate. FAD-binding positions include Arg-319 and 339 to 342 (QQHR). Positions 341, 391, 395, and 403 each coordinate ATP. Gly-410 lines the FAD pocket. Substrate is bound at residue 432 to 433 (YE). The Proton acceptor role is filled by Glu-433. Glu-435 provides a ligand contact to FAD. Residues 526-529 (RASR) and Tyr-574 contribute to the ATP site. Residues 660–662 (AKL) carry the Microbody targeting signal motif.

Belongs to the acyl-CoA oxidase family. As to quaternary structure, homodimer. The cofactor is FAD.

It is found in the peroxisome. It catalyses the reaction asc-C9-CoA + O2 = asc-DeltaC9-CoA + H2O2. It participates in lipid metabolism; peroxisomal fatty acid beta-oxidation. With respect to regulation, activated by ATP. ATP binding leads to a conformational change that promotes FAD cofactor binding and enzyme activity. ATP binding likely occurs during acox-1.4 folding and/or dimer formation. Functionally, involved in the first step of peroxisomal beta-oxidation by catalyzing the desaturation of fatty acid-derived side chains of ascaroside pheromones, which regulates development and behavior. Specifically, shortens ascarosides with a 9-carbon side chain (asc-C9) and, in association with acox-1.1, may contribute to the shortening of ascarosides with a 11-carbon side chain (asc-C11). May contribute to the production of indol-3-carbonyl(IC)-ascarosides in association with acox-1.1 and acox-3. This is Acyl-coenzyme A oxidase acox-1.4 from Caenorhabditis elegans.